The primary structure comprises 347 residues: GMP reductase (347 aa).

108–131 (ADFEKTKQILDLNPALNFVCIDVA) is a binding site for NADP(+). The K(+) site is built by Gly181 and Gly183. Cys186 acts as the Thioimidate intermediate in catalysis. Position 216-239 (216-239 (IVSDGGCTTPGDVAKAFGGGADFV)) interacts with NADP(+).

Belongs to the IMPDH/GMPR family. GuaC type 1 subfamily. Homotetramer.

The catalysed reaction is IMP + NH4(+) + NADP(+) = GMP + NADPH + 2 H(+). Catalyzes the irreversible NADPH-dependent deamination of GMP to IMP. It functions in the conversion of nucleobase, nucleoside and nucleotide derivatives of G to A nucleotides, and in maintaining the intracellular balance of A and G nucleotides. In Shigella boydii serotype 4 (strain Sb227), this protein is GMP reductase.